Consider the following 130-residue polypeptide: Neelaredoxin (130 aa).

Fe cation-binding residues include Glu15, His17, His45, His51, Cys115, and His118.

It belongs to the desulfoferrodoxin family. As to quaternary structure, monomer. Fe cation is required as a cofactor.

It carries out the reaction 2 superoxide + 2 H(+) = H2O2 + O2. In terms of biological role, non-heme iron protein. This chain is Neelaredoxin (nlr), found in Megalodesulfovibrio gigas (Desulfovibrio gigas).